We begin with the raw amino-acid sequence, 395 residues long: Acid ceramidase (395 aa).

The N-terminal stretch at 1–20 (MLGWSRLTFILLSGIVTCLV) is a signal peptide. Cys-31 and Cys-340 are joined by a disulfide. The active-site Nucleophile is Cys-143. N-linked (GlcNAc...) asparagine glycans are attached at residues Asn-195, Asn-259, Asn-286, and Asn-342. Cysteines 388 and 392 form a disulfide.

It belongs to the acid ceramidase family. Heterodimer; disulfide-linked. The heterodimer is composed of the disulfide-linked alpha and beta chains produced by autocatalytic cleavage of the precursor. Post-translationally, N-glycosylated. Proteolytically cleaved into two chains alpha and beta that remain associated via a disulfide bond. Cleavage gives rise to a conformation change that activates the enzyme. The same catalytic Cys residue mediates the autoproteolytic cleavage and subsequent hydrolysis of lipid substrates. The beta chain may undergo an additional C-terminal processing.

The protein resides in the lysosome. The protein localises to the secreted. It carries out the reaction an N-acylsphing-4-enine + H2O = sphing-4-enine + a fatty acid. The catalysed reaction is N-dodecanoylsphing-4-enine + H2O = dodecanoate + sphing-4-enine. The enzyme catalyses N-tetradecanoylsphing-4-enine + H2O = tetradecanoate + sphing-4-enine. It catalyses the reaction N-hexadecanoylsphing-4-enine + H2O = sphing-4-enine + hexadecanoate. It carries out the reaction N-octadecanoylsphing-4-enine + H2O = sphing-4-enine + octadecanoate. The catalysed reaction is N-dodecanoyl-(4R)-hydroxysphinganine + H2O = (4R)-hydroxysphinganine + dodecanoate. The enzyme catalyses N-(dodecanoyl)-sphinganine + H2O = dodecanoate + sphinganine. It catalyses the reaction N-(acetyl)-sphing-4-enine + H2O = sphing-4-enine + acetate. It carries out the reaction N-(hexanoyl)sphing-4-enine + H2O = hexanoate + sphing-4-enine. The catalysed reaction is N-octanoylsphing-4-enine + H2O = octanoate + sphing-4-enine. The enzyme catalyses N-(9Z-octadecenoyl)-sphing-4-enine + H2O = sphing-4-enine + (9Z)-octadecenoate. It catalyses the reaction N-dodecanoylethanolamine + H2O = dodecanoate + ethanolamine. It participates in lipid metabolism; sphingolipid metabolism. Its function is as follows. Lysosomal ceramidase that hydrolyzes sphingolipid ceramides into sphingosine and free fatty acids at acidic pH. Ceramides, sphingosine, and its phosphorylated form sphingosine-1-phosphate are bioactive lipids that mediate cellular signaling pathways regulating several biological processes including cell proliferation, apoptosis and differentiation. Has a higher catalytic efficiency towards C12-ceramides versus other ceramides. Also catalyzes the reverse reaction allowing the synthesis of ceramides from fatty acids and sphingosine. For the reverse synthetic reaction, the natural sphingosine D-erythro isomer is more efficiently utilized as a substrate compared to D-erythro-dihydrosphingosine and D-erythro-phytosphingosine, while the fatty acids with chain lengths of 12 or 14 carbons are the most efficiently used. Also has an N-acylethanolamine hydrolase activity. By regulating the levels of ceramides, sphingosine and sphingosine-1-phosphate in the epidermis, mediates the calcium-induced differentiation of epidermal keratinocytes. Also indirectly regulates tumor necrosis factor/TNF-induced apoptosis. By regulating the intracellular balance between ceramides and sphingosine, in adrenocortical cells, probably also acts as a regulator of steroidogenesis. The polypeptide is Acid ceramidase (Bos taurus (Bovine)).